Reading from the N-terminus, the 329-residue chain is Malate dehydrogenase (329 aa).

11-17 contacts NAD(+); sequence GAAGQIG. Arg92 and Arg98 together coordinate substrate. NAD(+) is bound by residues Asn105, Gln112, and 129–131; that span reads VGN. Residues Asn131 and Arg165 each coordinate substrate. Residue His190 is the Proton acceptor of the active site.

It belongs to the LDH/MDH superfamily. MDH type 2 family.

It catalyses the reaction (S)-malate + NAD(+) = oxaloacetate + NADH + H(+). Its function is as follows. Catalyzes the reversible oxidation of malate to oxaloacetate. This Laribacter hongkongensis (strain HLHK9) protein is Malate dehydrogenase.